Reading from the N-terminus, the 510-residue chain is D-alanine--D-alanyl carrier protein ligase (510 aa).

157–158 (TS) is an ATP binding site. Residue D202 participates in D-alanine binding. 297 to 302 (NTYGPT) contacts ATP. V306 lines the D-alanine pocket. D389 and K498 together coordinate ATP. K498 is a binding site for D-alanine.

This sequence belongs to the ATP-dependent AMP-binding enzyme family. DltA subfamily.

The protein localises to the cytoplasm. It carries out the reaction holo-[D-alanyl-carrier protein] + D-alanine + ATP = D-alanyl-[D-alanyl-carrier protein] + AMP + diphosphate. It participates in cell wall biogenesis; lipoteichoic acid biosynthesis. Its function is as follows. Catalyzes the first step in the D-alanylation of lipoteichoic acid (LTA), the activation of D-alanine and its transfer onto the D-alanyl carrier protein (Dcp) DltC. In an ATP-dependent two-step reaction, forms a high energy D-alanyl-AMP intermediate, followed by transfer of the D-alanyl residue as a thiol ester to the phosphopantheinyl prosthetic group of the Dcp. D-alanylation of LTA plays an important role in modulating the properties of the cell wall in Gram-positive bacteria, influencing the net charge of the cell wall. This Listeria innocua serovar 6a (strain ATCC BAA-680 / CLIP 11262) protein is D-alanine--D-alanyl carrier protein ligase.